A 192-amino-acid chain; its full sequence is Charged multivesicular body protein 1 (192 aa).

Coiled-coil stretches lie at residues 7–35 (QLKF…KLKK) and 102–125 (NMDL…LDVQ). The tract at residues 164–192 (QMGSAPSEKVQQGETDELTERLNRLKQKN) is disordered.

Belongs to the SNF7 family. In terms of assembly, probable peripherally associated component of the endosomal sorting required for transport complex III (ESCRT-III).

The protein localises to the endosome membrane. Its function is as follows. Probable peripherally associated component of the endosomal sorting required for transport complex III (ESCRT-III) which is involved in multivesicular bodies (MVBs) formation and sorting of endosomal cargo proteins into MVBs. MVBs contain intraluminal vesicles (ILVs) that are generated by invagination and scission from the limiting membrane of the endosome and are delivered to lysosomes enabling degradation of membrane proteins. This Dictyostelium discoideum (Social amoeba) protein is Charged multivesicular body protein 1 (chmp1).